A 401-amino-acid polypeptide reads, in one-letter code: Tyrosine--tRNA ligase (401 aa).

Residues 43–52 (PTAPDLHLGH) carry the 'HIGH' region motif. A 'KMSKS' region motif is present at residues 227 to 231 (KMSKS). Residue Lys-230 participates in ATP binding. The 62-residue stretch at 338-399 (MAIGNVLKEA…GKRRFAKINL (62 aa)) folds into the S4 RNA-binding domain.

This sequence belongs to the class-I aminoacyl-tRNA synthetase family. TyrS type 2 subfamily. In terms of assembly, homodimer.

The protein resides in the cytoplasm. It catalyses the reaction tRNA(Tyr) + L-tyrosine + ATP = L-tyrosyl-tRNA(Tyr) + AMP + diphosphate + H(+). Its function is as follows. Catalyzes the attachment of tyrosine to tRNA(Tyr) in a two-step reaction: tyrosine is first activated by ATP to form Tyr-AMP and then transferred to the acceptor end of tRNA(Tyr). The sequence is that of Tyrosine--tRNA ligase from Idiomarina loihiensis (strain ATCC BAA-735 / DSM 15497 / L2-TR).